Here is a 439-residue protein sequence, read N- to C-terminus: Ribosomal protein uS12 methylthiotransferase RimO (439 aa).

Positions 7–119 (KQLCLISLGC…IDIMIAKKQN (113 aa)) constitute an MTTase N-terminal domain. [4Fe-4S] cluster contacts are provided by Cys16, Cys50, Cys82, Cys151, Cys155, and Cys158. One can recognise a Radical SAM core domain in the interval 137-368 (TGSSVHAYVK…ALKHQNHSFK (232 aa)).

The protein belongs to the methylthiotransferase family. RimO subfamily. Requires [4Fe-4S] cluster as cofactor.

Its subcellular location is the cytoplasm. It catalyses the reaction L-aspartate(89)-[ribosomal protein uS12]-hydrogen + (sulfur carrier)-SH + AH2 + 2 S-adenosyl-L-methionine = 3-methylsulfanyl-L-aspartate(89)-[ribosomal protein uS12]-hydrogen + (sulfur carrier)-H + 5'-deoxyadenosine + L-methionine + A + S-adenosyl-L-homocysteine + 2 H(+). In terms of biological role, catalyzes the methylthiolation of an aspartic acid residue of ribosomal protein uS12. In Helicobacter pylori (strain G27), this protein is Ribosomal protein uS12 methylthiotransferase RimO.